Here is a 217-residue protein sequence, read N- to C-terminus: Monomethylamine corrinoid protein 1 (217 aa).

The B12-binding N-terminal domain maps to 1–91 (MANQEIFDKL…ELEKNKKEGE (91 aa)). One can recognise a B12-binding domain in the interval 93–217 (AGLAITFVAE…AAKVALEVMK (125 aa)). His-106 contributes to the methylcob(III)alamin binding site.

Can form a complex with MtmB.

The protein operates within one-carbon metabolism; methanogenesis from methylamine. Its function is as follows. Acts as a methyl group carrier between MtmB and MtbA. The polypeptide is Monomethylamine corrinoid protein 1 (mtmC1) (Methanosarcina barkeri).